The following is a 269-amino-acid chain: Ribosomal RNA small subunit methyltransferase J (269 aa).

Residues 125–126 (ER) and Asp-179 contribute to the S-adenosyl-L-methionine site.

The protein belongs to the methyltransferase superfamily. RsmJ family.

The protein resides in the cytoplasm. It carries out the reaction guanosine(1516) in 16S rRNA + S-adenosyl-L-methionine = N(2)-methylguanosine(1516) in 16S rRNA + S-adenosyl-L-homocysteine + H(+). Functionally, specifically methylates the guanosine in position 1516 of 16S rRNA. The polypeptide is Ribosomal RNA small subunit methyltransferase J (Pseudomonas savastanoi pv. phaseolicola (strain 1448A / Race 6) (Pseudomonas syringae pv. phaseolicola (strain 1448A / Race 6))).